The sequence spans 147 residues: Lysozyme C-3 (147 aa).

Positions 1–18 are cleaved as a signal peptide; the sequence is MKALIILGFLFLSVAVQG. In terms of domain architecture, C-type lysozyme spans 19 to 147; it reads KVFERCELAR…VSSYVQGCTL (129 aa). Cystine bridges form between C24/C145, C48/C133, C83/C99, and C95/C113. Residues E53 and D71 contribute to the active site.

The protein belongs to the glycosyl hydrolase 22 family. Monomer. Stomach-specific.

The catalysed reaction is Hydrolysis of (1-&gt;4)-beta-linkages between N-acetylmuramic acid and N-acetyl-D-glucosamine residues in a peptidoglycan and between N-acetyl-D-glucosamine residues in chitodextrins.. Lysozymes have primarily a bacteriolytic function; those in tissues and body fluids are associated with the monocyte-macrophage system and enhance the activity of immunoagents. The sequence is that of Lysozyme C-3 (LYZ3) from Bos taurus (Bovine).